Reading from the N-terminus, the 187-residue chain is Phosphatidylethanolamine-binding protein 2 (187 aa).

A phosphoserine mark is found at S13, S52, and S54.

This sequence belongs to the phosphatidylethanolamine-binding protein family. As to expression, testis specific.

It localises to the cytoplasm. Its function is as follows. May bind to phospholipids. May act as serine protease inhibitor. The protein is Phosphatidylethanolamine-binding protein 2 (Pbp2) of Mus musculus (Mouse).